Here is a 122-residue protein sequence, read N- to C-terminus: Large ribosomal subunit protein uL14c (122 aa).

This sequence belongs to the universal ribosomal protein uL14 family. Part of the 50S ribosomal subunit.

The protein localises to the plastid. It is found in the chloroplast. Functionally, binds to 23S rRNA. The chain is Large ribosomal subunit protein uL14c from Vitis vinifera (Grape).